The chain runs to 251 residues: Sugar fermentation stimulation protein homolog (251 aa).

Belongs to the SfsA family.

The chain is Sugar fermentation stimulation protein homolog from Symbiobacterium thermophilum (strain DSM 24528 / JCM 14929 / IAM 14863 / T).